The chain runs to 636 residues: Iron transport multicopper oxidase FET3 (636 aa).

The N-terminal stretch at 1–21 is a signal peptide; it reads MTNALLSIAVLLFSMLSLAQA. Residues 22 to 559 lie on the Extracellular side of the membrane; sequence ETHTFNWTTG…AFIPTGFTKK (538 aa). N-linked (GlcNAc...) asparagine glycans are attached at residues Asn-27, Asn-74, and Asn-77. Plastocyanin-like domains lie at 32-146 and 157-301; these read WDYR…IKDD and SLSL…VYNK. Cu cation-binding residues include His-81 and His-83. N-linked (GlcNAc...) asparagine glycans are attached at residues Asn-88 and Asn-113. Cu cation is bound by residues His-126 and His-128. N-linked (GlcNAc...) asparagine glycans are attached at residues Asn-194, Asn-198, Asn-244, Asn-265, Asn-292, Asn-300, Asn-359, and Asn-381. The region spanning 362–502 is the Plastocyanin-like 3 domain; sequence YTAPKVPTLM…GLGLVLVEDP (141 aa). Cu cation is bound by residues His-413, His-416, His-418, His-483, Cys-484, His-485, and His-489. Residues 560 to 584 form a helical membrane-spanning segment; sequence GIIAMTFSCFAGILGIITIAIYGMM. The Cytoplasmic portion of the chain corresponds to 585-636; that stretch reads DMEDATEKVIRDLHVDPEVLLNEVDENEERQVNEDRHSTEKHQFLTKAKRFF.

The protein belongs to the multicopper oxidase family. Cu cation serves as cofactor.

The protein resides in the cell membrane. The catalysed reaction is 4 Fe(2+) + O2 + 4 H(+) = 4 Fe(3+) + 2 H2O. It carries out the reaction 4 Cu(+) + O2 + 4 H(+) = 4 Cu(2+) + 2 H2O. Its function is as follows. Iron transport multicopper ferroxidase required for Fe(2+) ion high affinity uptake. Required to oxidize Fe(2+) to Fe(3+), which is then transported into the cell via the ferric iron permease FTR1. Essential component of copper-dependent iron transport. Also has cuprous oxidase activity. The chain is Iron transport multicopper oxidase FET3 (FET3) from Saccharomyces cerevisiae (strain ATCC 204508 / S288c) (Baker's yeast).